The chain runs to 199 residues: Peptidyl-tRNA hydrolase (199 aa).

Y25 contributes to the tRNA binding site. The active-site Proton acceptor is H30. Residues Y76, N78, and N124 each contribute to the tRNA site.

It belongs to the PTH family. Monomer.

It is found in the cytoplasm. The enzyme catalyses an N-acyl-L-alpha-aminoacyl-tRNA + H2O = an N-acyl-L-amino acid + a tRNA + H(+). Functionally, hydrolyzes ribosome-free peptidyl-tRNAs (with 1 or more amino acids incorporated), which drop off the ribosome during protein synthesis, or as a result of ribosome stalling. Catalyzes the release of premature peptidyl moieties from peptidyl-tRNA molecules trapped in stalled 50S ribosomal subunits, and thus maintains levels of free tRNAs and 50S ribosomes. The polypeptide is Peptidyl-tRNA hydrolase (Mycobacterium leprae (strain Br4923)).